Consider the following 251-residue polypeptide: Triosephosphate isomerase (251 aa).

Asparagine 9–lysine 11 contacts substrate. The Electrophile role is filled by histidine 95. Glutamate 167 serves as the catalytic Proton acceptor. Substrate contacts are provided by residues glycine 173, serine 213, and glycine 234 to glycine 235. The residue at position 213 (serine 213) is a Phosphoserine.

The protein belongs to the triosephosphate isomerase family. Homodimer.

The protein resides in the cytoplasm. The enzyme catalyses D-glyceraldehyde 3-phosphate = dihydroxyacetone phosphate. Its pathway is carbohydrate biosynthesis; gluconeogenesis. It functions in the pathway carbohydrate degradation; glycolysis; D-glyceraldehyde 3-phosphate from glycerone phosphate: step 1/1. Functionally, involved in the gluconeogenesis. Catalyzes stereospecifically the conversion of dihydroxyacetone phosphate (DHAP) to D-glyceraldehyde-3-phosphate (G3P). The chain is Triosephosphate isomerase from Bacillus cereus (strain ATCC 10987 / NRS 248).